We begin with the raw amino-acid sequence, 779 residues long: Endonuclease MutS2 (779 aa).

328–335 provides a ligand contact to ATP; the sequence is GPNTGGKT. A Smr domain is found at 704–779; it reads LDLRGKRYEE…GSGATIVTLG (76 aa).

Belongs to the DNA mismatch repair MutS family. MutS2 subfamily. As to quaternary structure, homodimer. Binds to stalled ribosomes, contacting rRNA.

Its function is as follows. Endonuclease that is involved in the suppression of homologous recombination and thus may have a key role in the control of bacterial genetic diversity. Acts as a ribosome collision sensor, splitting the ribosome into its 2 subunits. Detects stalled/collided 70S ribosomes which it binds and splits by an ATP-hydrolysis driven conformational change. Acts upstream of the ribosome quality control system (RQC), a ribosome-associated complex that mediates the extraction of incompletely synthesized nascent chains from stalled ribosomes and their subsequent degradation. Probably generates substrates for RQC. This Streptococcus pyogenes serotype M5 (strain Manfredo) protein is Endonuclease MutS2.